The chain runs to 368 residues: MTELKRTPLFDAHNRYGGKLVDFAGWEMSVQFEGLTAEHEAVRNAAGIFDVSHMGEIEVRGKDAEAFVQYLVTNDVAALEDNQIVYTFMCYPDGGIVDDLLVYKFNKEYYYLVVNASNSDKDFAWMNENKGAYDVEIINISDSVSQVAVQGPKAEEIVQELTDTDLSEIPFFYFKNDVVINGANCLISRTGYTGEDGFEIYVDNDKVDALWDKIIEVGKDRGLKPAGLGARDTLRFEATLPLYGHEIDKDISPLEAGLGFFVKLNKENFIGKDALVRQKEEGLKRKVVGFEMKENGIPRQGYEVKVGDKVIGVVTTGYNSPTLKKNIGYALIDAEYAALGTPIDIQVRKKTLKAEVVSKKFYTRSTKK.

The protein belongs to the GcvT family. The glycine cleavage system is composed of four proteins: P, T, L and H.

The enzyme catalyses N(6)-[(R)-S(8)-aminomethyldihydrolipoyl]-L-lysyl-[protein] + (6S)-5,6,7,8-tetrahydrofolate = N(6)-[(R)-dihydrolipoyl]-L-lysyl-[protein] + (6R)-5,10-methylene-5,6,7,8-tetrahydrofolate + NH4(+). In terms of biological role, the glycine cleavage system catalyzes the degradation of glycine. This Alkaliphilus oremlandii (strain OhILAs) (Clostridium oremlandii (strain OhILAs)) protein is Aminomethyltransferase.